The chain runs to 278 residues: Ras-related protein Rab-40B (278 aa).

3 residues coordinate GTP: serine 23, glycine 26, and lysine 27. Positions 41-49 (SPYGHPAGI) are switch-I. Position 69 (aspartate 69) interacts with Mg(2+). 3 residues coordinate GTP: glycine 72, asparagine 126, and arginine 127. Positions 72-88 (GQGRFCTIFRSYSRGAQ) are switch-II. The 54-residue stretch at 175–228 (LLRHGMDRLWRPSKVLSLQDLCCRAVVSCTPVHLVDKLPLPIALRSHLKSFSMA) folds into the SOCS box domain. Residues 242–278 (SLTTSSTHKRSSLRKVKLVRPPQSPPKNCTRNSCKIS) are disordered. Residues 248 to 259 (THKRSSLRKVKL) show a composition bias toward basic residues. Positions 267–278 (PKNCTRNSCKIS) are enriched in polar residues. Cysteine 270 carries S-palmitoyl cysteine lipidation. A lipid anchor (S-geranylgeranyl cysteine) is attached at cysteine 275.

Belongs to the small GTPase superfamily. Rab family. In terms of assembly, component of the cullin-5-RING E3 ubiquitin-protein ligase complex (ECS(RAB40B) complex) composed of CUL5, Elongin BC (ELOB and ELOC), RNF7/RBX2 and RAB40B; RAB40B interaction with ECS complex is GTP-independent. Binds (GTP-bound) LIMA1; interaction promotes LIMA1 subcellular localization in lamellipodia during cell migration. Interacts (GTP-bound) with TKS5/SH3PXD2A (via PX domain); interaction promotes invadopodia-mediated extracellular matrix degradation. The cofactor is Mg(2+).

It localises to the cell membrane. The protein resides in the cytoplasm. The protein localises to the cytosol. Its subcellular location is the cell projection. It is found in the lamellipodium membrane. It localises to the ruffle. The enzyme catalyses GTP + H2O = GDP + phosphate + H(+). It participates in protein modification; protein ubiquitination. Its activity is regulated as follows. Regulated by guanine nucleotide exchange factors (GEFs) which promote the exchange of bound GDP for free GTP. Regulated by GTPase activating proteins (GAPs) which increase the GTP hydrolysis activity. Inhibited by GDP dissociation inhibitors (GDIs). In terms of biological role, RAB40B small GTPase acts as substrate-recognition components of the ECS(RAB40B) E3 ubiquitin ligase complex which mediates the ubiquitination of target proteins. The Rab40 subfamily belongs to the Rab family that are key regulators of intracellular membrane trafficking, from the formation of transport vesicles to their fusion with membranes. Rabs cycle between an inactive GDP-bound form and an active GTP-bound form that is able to recruit to membranes different sets of downstream effectors directly responsible for vesicle formation, movement, tethering and fusion. As part of the ECS(RAB40B) complex, GTP-bound RAB40B promotes LIMA1/EPLIN ubiquitination and degradation, thereby regulating leading-edge actin dynamics during cell migration. As part of the ECS(RAB40B) complex, GTP-bound RAB40B also ubiquitinates RAP2A GTPase which promotes its localization to lamellipodia and activation to drive cell migration. The ECS(RAB40B) complex does not mediate canonical ubiquitin-dependent degradation of RAP2. RAB40B also binds TKS5/SH3PXD2A effector independently from ECS complex to promote invadopodia-mediated extracellular matrix degradation. The sequence is that of Ras-related protein Rab-40B from Homo sapiens (Human).